Consider the following 2399-residue polypeptide: Protein DOP1A (2399 aa).

Disordered regions lie at residues 556–598 (PSGQ…SSES), 619–660 (NGQG…GAAG), 1105–1124 (SDSGCSQSSAGDNFSYEVDP), 1166–1188 (SVTSELEIESLQTKSSDLDPGKE), 1234–1263 (SPCISGTAQTLNDSSVPSETKSRQRSHSSI), and 1279–1308 (ETIVKESGKQPGAKPKVKLARKKDEDKKKA). Low complexity-rich tracts occupy residues 629–647 (GSTSSETETASTVGSEETV) and 1105–1116 (SDSGCSQSSAGD). Polar residues-rich tracts occupy residues 1166-1180 (SVTSELEIESLQTKS) and 1234-1252 (SPCISGTAQTLNDSSVPSE). Phosphoserine is present on serine 1261.

It belongs to the DOP1 family.

It localises to the golgi apparatus membrane. Its function is as follows. May be involved in protein traffic between late Golgi and early endosomes. The polypeptide is Protein DOP1A (Dop1a) (Mus musculus (Mouse)).